Here is a 274-residue protein sequence, read N- to C-terminus: Undecaprenyl-diphosphatase 1 (274 aa).

The next 8 helical transmembrane spans lie at 7–27, 48–68, 88–108, 115–135, 151–171, 189–209, 221–241, and 253–273; these read LEIF…WLPV, FIST…LVIF, VRLW…GILF, LFFN…IMIG, VTYK…IPGT, YVAA…ASAL, FEWL…IVVI, and FKVF…YFFL.

The protein belongs to the UppP family.

The protein localises to the cell membrane. The catalysed reaction is di-trans,octa-cis-undecaprenyl diphosphate + H2O = di-trans,octa-cis-undecaprenyl phosphate + phosphate + H(+). Catalyzes the dephosphorylation of undecaprenyl diphosphate (UPP). Confers resistance to bacitracin. This chain is Undecaprenyl-diphosphatase 1, found in Clostridioides difficile (strain 630) (Peptoclostridium difficile).